Consider the following 295-residue polypeptide: Cyclic dipyrimidine nucleotide synthase CdnE (295 aa).

Residues 1–25 (MSIDWEQTFRKWSKPSSETESTKAE) form a disordered region. The UTP site is built by Gln51, Ser53, and Asn59. Residues Asp65 and Asp67 each contribute to the Mg(2+) site. Asp67, Asp124, and Lys125 together coordinate UTP. Asp128 and Asp139 together coordinate Mg(2+). Residues Asp139, Asn173, Lys201, and Ser220 each coordinate UTP. The Pyrimidine specificity motif (R/Q)xW in donor pocket signature appears at 274 to 276 (QMW).

The protein belongs to the CD-NTase family. E02 subfamily. Requires Mg(2+) as cofactor.

The catalysed reaction is 2 UTP = c-di-UMP + 2 diphosphate. The enzyme catalyses UTP + CTP = cyclic CMP-UMP + 2 diphosphate. Functionally, cyclic nucleotide synthase (second messenger synthase) of a CBASS antivirus system. CBASS (cyclic oligonucleotide-based antiphage signaling system) provides immunity against bacteriophage. The CD-NTase protein synthesizes cyclic nucleotides in response to infection; these serve as specific second messenger signals. The signals activate a diverse range of effectors, leading to bacterial cell death and thus abortive phage infection. A type I-B(UU) CBASS system. Its function is as follows. Cyclic dinucleotide synthase that catalyzes the synthesis of 3',3'-cyclic UMP-UMP (c-di-UMP) as the major product, and of 3',3'-cyclic CMP-UMP as a minor product, which are second messengers for cell signal transduction. The polypeptide is Cyclic dipyrimidine nucleotide synthase CdnE (Legionella pneumophila).